The chain runs to 539 residues: 2-isopropylmalate synthase (539 aa).

The region spanning 8 to 269 (VLIFDTTLRD…YFNPFFGRPP (262 aa)) is the Pyruvate carboxyltransferase domain. The Mn(2+) site is built by D17, H208, H210, and N244. The interval 408-539 (QLKLVQVSCG…DLAKVEKKGI (132 aa)) is regulatory domain.

The protein belongs to the alpha-IPM synthase/homocitrate synthase family. LeuA type 1 subfamily. As to quaternary structure, homodimer. Mn(2+) serves as cofactor.

The protein resides in the cytoplasm. The catalysed reaction is 3-methyl-2-oxobutanoate + acetyl-CoA + H2O = (2S)-2-isopropylmalate + CoA + H(+). It participates in amino-acid biosynthesis; L-leucine biosynthesis; L-leucine from 3-methyl-2-oxobutanoate: step 1/4. Catalyzes the condensation of the acetyl group of acetyl-CoA with 3-methyl-2-oxobutanoate (2-ketoisovalerate) to form 3-carboxy-3-hydroxy-4-methylpentanoate (2-isopropylmalate). In Prochlorococcus marinus (strain NATL2A), this protein is 2-isopropylmalate synthase.